A 540-amino-acid polypeptide reads, in one-letter code: Chaperonin GroEL (540 aa).

ATP is bound by residues 30 to 33 (TLGP), lysine 51, 87 to 91 (DGTTT), glycine 415, 479 to 481 (NAA), and aspartate 495.

Belongs to the chaperonin (HSP60) family. In terms of assembly, forms a cylinder of 14 subunits composed of two heptameric rings stacked back-to-back. Interacts with the co-chaperonin GroES.

Its subcellular location is the cytoplasm. It catalyses the reaction ATP + H2O + a folded polypeptide = ADP + phosphate + an unfolded polypeptide.. Its function is as follows. Together with its co-chaperonin GroES, plays an essential role in assisting protein folding. The GroEL-GroES system forms a nano-cage that allows encapsulation of the non-native substrate proteins and provides a physical environment optimized to promote and accelerate protein folding. This chain is Chaperonin GroEL, found in Raoultella planticola (Klebsiella planticola).